A 410-amino-acid chain; its full sequence is Toluene 1,2-dioxygenase system ferredoxin--NAD(+) reductase component (410 aa).

4-35 (HVAIIGNGVGGFTTAQALRAEGFEGRISLIGD) is a binding site for FAD. Position 145 to 173 (145 to 173 (RLLIVGGGLIGCEVATTARKLGLSVTILE)) interacts with NAD(+).

This sequence belongs to the bacterial ring-hydroxylating dioxygenase ferredoxin reductase family. As to quaternary structure, this dioxygenase system consists of four proteins: the two subunits of the hydroxylase component (todC1 and todC2), a ferredoxin (TodB) and a ferredoxin reductase (TodA). It depends on FAD as a cofactor.

The catalysed reaction is 2 reduced [2Fe-2S]-[ferredoxin] + NAD(+) + H(+) = 2 oxidized [2Fe-2S]-[ferredoxin] + NADH. Its pathway is xenobiotic degradation; toluene degradation. Its function is as follows. Part of the electron transfer component of toluene 1,2-dioxygenase, transfers electrons from ferredoxin (TodB) to NADH. The protein is Toluene 1,2-dioxygenase system ferredoxin--NAD(+) reductase component (todA) of Pseudomonas putida (strain ATCC 700007 / DSM 6899 / JCM 31910 / BCRC 17059 / LMG 24140 / F1).